Reading from the N-terminus, the 483-residue chain is ATP-dependent protease ATPase subunit HslU (483 aa).

ATP-binding positions include Val-18 and 60–65; that span reads GVGKTE. 2 stretches are compositionally biased toward low complexity: residues 136–147 and 171–181; these read LPGGAPQPAPAQ and AQADASQASPP. The disordered stretch occupies residues 136-212; it reads LPGGAPQPAP…HGGKLDDREV (77 aa). Positions 182–191 are enriched in polar residues; that stretch reads TGTGSAPDSR. Residues 192-209 show a composition bias toward basic and acidic residues; that stretch reads SSTREKLRTLWHGGKLDD. Asp-296, Glu-361, and Arg-433 together coordinate ATP.

Belongs to the ClpX chaperone family. HslU subfamily. In terms of assembly, a double ring-shaped homohexamer of HslV is capped on each side by a ring-shaped HslU homohexamer. The assembly of the HslU/HslV complex is dependent on binding of ATP.

The protein localises to the cytoplasm. Its function is as follows. ATPase subunit of a proteasome-like degradation complex; this subunit has chaperone activity. The binding of ATP and its subsequent hydrolysis by HslU are essential for unfolding of protein substrates subsequently hydrolyzed by HslV. HslU recognizes the N-terminal part of its protein substrates and unfolds these before they are guided to HslV for hydrolysis. The polypeptide is ATP-dependent protease ATPase subunit HslU (Nitratidesulfovibrio vulgaris (strain DSM 19637 / Miyazaki F) (Desulfovibrio vulgaris)).